The primary structure comprises 352 residues: Putative [LysW]-L-2-aminoadipate/[LysW]-L-glutamate phosphate reductase (352 aa).

NADP(+)-binding positions include 10-13 (SGFT) and 34-36 (SRR). Residue Cys-151 is part of the active site. Asn-319 provides a ligand contact to NADP(+).

It belongs to the NAGSA dehydrogenase family. Type 1 subfamily. LysY sub-subfamily.

Its subcellular location is the cytoplasm. It carries out the reaction [amino-group carrier protein]-C-terminal-N-(1-carboxy-5-oxopentan-1-yl)-L-glutamine + phosphate + NADP(+) = [amino-group carrier protein]-C-terminal-N-(1-carboxy-5-phosphooxy-5-oxopentan-1-yl)-L-glutamine + NADPH + H(+). It catalyses the reaction [amino-group carrier protein]-C-terminal-gamma-(L-glutamyl-5-semialdehyde)-L-glutamate + phosphate + NADP(+) = [amino-group carrier protein]-C-terminal-gamma-(5-phospho-L-glutamyl)-L-glutamate + NADPH + H(+). It functions in the pathway amino-acid biosynthesis; L-lysine biosynthesis via AAA pathway; L-lysine from L-alpha-aminoadipate (Thermus route): step 3/5. It participates in amino-acid biosynthesis; L-arginine biosynthesis. Involved in both the arginine and lysine biosynthetic pathways. This chain is Putative [LysW]-L-2-aminoadipate/[LysW]-L-glutamate phosphate reductase, found in Pyrobaculum islandicum (strain DSM 4184 / JCM 9189 / GEO3).